Reading from the N-terminus, the 617-residue chain is Chaperone protein HscA homolog (617 aa).

Belongs to the heat shock protein 70 family.

Chaperone involved in the maturation of iron-sulfur cluster-containing proteins. Has a low intrinsic ATPase activity which is markedly stimulated by HscB. In Vibrio campbellii (strain ATCC BAA-1116), this protein is Chaperone protein HscA homolog.